A 921-amino-acid chain; its full sequence is Sodium/calcium exchanger 2 (921 aa).

The N-terminal stretch at 1–20 (MAPLALMGVVLLLGVPHCLG) is a signal peptide. The interval 23-42 (TPTPSLPPPTANDSDASPEG) is disordered. The helical transmembrane segment at 69 to 89 (VARAVVYFVAMVYMFLGVSII) threads the bilayer. Asn125 and Asn130 each carry an N-linked (GlcNAc...) asparagine glycan. Transmembrane regions (helical) follow at residues 131–151 (LTLM…IEVC), 165–185 (IVGS…YVIP), 197–217 (VFFV…LILA), and 226–246 (VWEA…AWMA). The interval 248–267 (KRLLFYKYVYKRYRTDPRSG) is putative calmodulin-binding region. A disordered region spans residues 371 to 391 (HAADAARRPGATDGAPDDEDD). Calx-beta domains are found at residues 389 to 482 (EDDG…FVRL) and 512 to 611 (ATVT…FIEL). Ca(2+) is bound by residues Glu407, Asp443, Asp468, Asp469, Ile471, Glu473, Glu476, Asp518, Asp519, Asp520, Glu536, Asp598, Glu599, and Glu600. The residue at position 622 (Ser622) is a Phosphoserine. Glu665 lines the Ca(2+) pocket. The next 6 helical transmembrane spans lie at 721 to 741 (CFDY…ACVP), 749 to 769 (WACF…IGDL), 786 to 806 (VVFV…VAAL), 823 to 843 (AVNV…YWAV), 855 to 875 (LAFS…VLLY), and 893 to 913 (LATT…SSLE).

It belongs to the Ca(2+):cation antiporter (CaCA) (TC 2.A.19) family. SLC8 subfamily. As to expression, detected in kidney cortex, in distal convoluted tubules and connecting segments. Detected in brain and spinal cord (at protein level). Detected in brain, especially in hippocampus CA1, CA2 and CA3 fiels, dentate gyrus, cerebellum and brain cortex.

The protein resides in the cell membrane. It is found in the basolateral cell membrane. The enzyme catalyses Ca(2+)(in) + 3 Na(+)(out) = Ca(2+)(out) + 3 Na(+)(in). With respect to regulation, calcium transport is down-regulated by Na(+) and stimulated by Ca(2+). Mediates the electrogenic exchange of Ca(2+) against Na(+) ions across the cell membrane, and thereby contributes to the regulation of cytoplasmic Ca(2+) levels and Ca(2+)-dependent cellular processes. Contributes to cellular Ca(2+) homeostasis in excitable cells. Contributes to the rapid decrease of cytoplasmic Ca(2+) levels back to baseline after neuronal activation, and thereby contributes to modulate synaptic plasticity, learning and memory. Plays a role in regulating urinary Ca(2+) and Na(+) excretion. This is Sodium/calcium exchanger 2 from Mus musculus (Mouse).